We begin with the raw amino-acid sequence, 33 residues long: Photosystem II reaction center protein T (33 aa).

The chain crosses the membrane as a helical span at residues 3 to 23; that stretch reads ALVYTFLLVSTLGIIFFAIFF.

Belongs to the PsbT family. PSII is composed of 1 copy each of membrane proteins PsbA, PsbB, PsbC, PsbD, PsbE, PsbF, PsbH, PsbI, PsbJ, PsbK, PsbL, PsbM, PsbT, PsbY, PsbZ, Psb30/Ycf12, at least 3 peripheral proteins of the oxygen-evolving complex and a large number of cofactors. It forms dimeric complexes.

The protein localises to the plastid. It is found in the chloroplast thylakoid membrane. In terms of biological role, found at the monomer-monomer interface of the photosystem II (PS II) dimer, plays a role in assembly and dimerization of PSII. PSII is a light-driven water plastoquinone oxidoreductase, using light energy to abstract electrons from H(2)O, generating a proton gradient subsequently used for ATP formation. The sequence is that of Photosystem II reaction center protein T from Asparagus officinalis (Garden asparagus).